The chain runs to 654 residues: Endoplasmic reticulum chaperone BiP (654 aa).

The first 18 residues, 1-18, serve as a signal peptide directing secretion; sequence MKLSLVAAVLLLLCAARA. The required for interaction with ELAPOR1 stretch occupies residues 1–80; sequence MKLSLVAAVL…EGERLIGDAA (80 aa). Residue 36-39 coordinates ATP; sequence GTTY. A Phosphoserine modification is found at S86. K96 provides a ligand contact to ATP. K125 bears the N6-acetyllysine mark. Positions 125–280 are nucleotide-binding (NBD); sequence KPYIQVDIGG…KKKTGKDVRK (156 aa). Y160 carries the post-translational modification 3'-nitrotyrosine. Position 213 is an N6-acetyllysine (K213). Residue 227–229 participates in ATP binding; it reads GGT. K271 is modified (N6-acetyllysine). 293-300 contacts ATP; it reads EKAKRALS. At K326 the chain carries N6-acetyllysine. A Glycyl lysine isopeptide (Lys-Gly) (interchain with G-Cter in SUMO2) cross-link involves residue K352. Position 353 is an N6-acetyllysine; alternate (K353). A Glycyl lysine isopeptide (Lys-Gly) (interchain with G-Cter in SUMO1); alternate cross-link involves residue K353. 364–367 contributes to the ATP binding site; sequence GSTR. The interval 409–419 is interdomain linker; the sequence is QDTGDLVLLDV. Positions 420–500 are substrate-binding (SBD); it reads CPLTLGIETV…PRGVPQIEVT (81 aa). K447 is subject to N6-succinyllysine. R492 carries the post-translational modification Omega-N-methylarginine. Residue T518 is modified to O-AMP-threonine; alternate. A Phosphothreonine; alternate modification is found at T518. The residue at position 585 (K585) is an N6,N6,N6-trimethyllysine; by METTL21A; in vitro. K585 carries the post-translational modification N6,N6-dimethyllysine; alternate. Position 585 is an N6-methyllysine; alternate (K585). The residue at position 591 (K591) is an N6-methyllysine. A disordered region spans residues 632–654; the sequence is SKLYGSAGPPPTGEEDTSERDEL. Residues T643 and T648 each carry the phosphothreonine modification. Over residues 644-654 the composition is skewed to acidic residues; the sequence is GEEDTSERDEL. S649 is modified (phosphoserine). Residues 651–654 carry the Prevents secretion from ER motif; that stretch reads RDEL.

It belongs to the heat shock protein 70 family. In terms of assembly, monomer and homooligomer; homooligomerization via the interdomain linker inactivates the chaperone activity and acts as a storage of HSPA5/BiP molecules. Interacts with DNAJC1 (via J domain). Component of an EIF2 complex at least composed of CELF1/CUGBP1, CALR, CALR3, EIF2S1, EIF2S2, HSP90B1 and HSPA5. Part of a large chaperone multiprotein complex comprising DNAJB11, HSP90B1, HSPA5, HYOU, PDIA2, PDIA4, PDIA6, PPIB, SDF2L1, UGGT1 and very small amounts of ERP29, but not, or at very low levels, CALR nor CANX. Interacts with TMEM132A and TRIM21. May form a complex with ERLEC1, OS9, SEL1L and SYVN1. Interacts with DNAJC10. Interacts with DNAJB9/ERdj4; leading to recruit HSPA5/BiP to ERN1/IRE1. Interacts with ERN1/IRE1 (via luminal domain); the interaction takes place following interaction with DNAJB9/ERdj4 and leads to inactivate ERN1/IRE1, the interaction also competitively inhibits ERN1 interaction with MANF. Interacts directly with MANF (via SAP domain); the interaction inhibits ATP binding to HSPA5/BiP and subsequent nucleotide exchange. Interacts with EIF2AK3/PERK (via luminal domain); interaction leads to inactivate EIF2AK3/PERK. Interacts with MX1. Interacts with METTL23. Interacts with CEMIP; the interaction induces calcium leakage from the endoplasmic reticulum and cell migration. Interacts with PCSK4 form; the interaction takes place in the endoplasmic reticulum. Interacts with CIPC. Interacts with CCDC88B (via C-terminus); the interaction opposes ERN1-mediated JNK activation, protecting against apoptosis. Interacts with INPP5K; necessary for INPP5K localization at the endoplasmic reticulum. Interacts with MANF; the interaction is direct. Interacts with LOXL2; leading to activate the ERN1/IRE1-XBP1 pathway of the unfolded protein response. Interacts with CLU under stressed condition; interaction increases CLU protein stability; facilitates its retrotranslocation and redistribution to the mitochondria; cooperatively suppress stress-induced apoptosis by stabilizing mitochondrial membrane integrity. Interacts with CCDC47. Interacts with CLN3. Interacts with ELAPOR1; may regulate the function of HSPA5 in apoptosis and cell proliferation. Interacts with CASP7. Interacts with ILDR2; the interaction stabilizes ILDR2 expression. Interacts with ADAM7. In terms of processing, in unstressed cells, AMPylation at Thr-518 by FICD inactivates the chaperome activity: AMPylated form is locked in a relatively inert state and only weakly stimulated by J domain-containing proteins. In response to endoplasmic reticulum stress, de-AMPylation by the same protein, FICD, restores the chaperone activity.

The protein resides in the endoplasmic reticulum lumen. It localises to the melanosome. Its subcellular location is the cytoplasm. It is found in the cell surface. It catalyses the reaction ATP + H2O = ADP + phosphate + H(+). With respect to regulation, the chaperone activity is regulated by ATP-induced allosteric coupling of the nucleotide-binding (NBD) and substrate-binding (SBD) domains. In the ADP-bound and nucleotide-free (apo) states, the two domains have little interaction. In contrast, in the ATP-bound state the two domains are tightly coupled, which results in drastically accelerated kinetics in both binding and release of polypeptide substrates. J domain-containing co-chaperones (DNAJB9/ERdj4 or DNAJC10/ERdj5) stimulate the ATPase activity and are required for efficient substrate recognition by HSPA5/BiP. Homooligomerization inactivates participating HSPA5/BiP protomers and probably act as reservoirs to store HSPA5/BiP molecules when they are not needed by the cell. Endoplasmic reticulum chaperone that plays a key role in protein folding and quality control in the endoplasmic reticulum lumen. Involved in the correct folding of proteins and degradation of misfolded proteins via its interaction with DNAJC10/ERdj5, probably to facilitate the release of DNAJC10/ERdj5 from its substrate. Acts as a key repressor of the EIF2AK3/PERK and ERN1/IRE1-mediated unfolded protein response (UPR). In the unstressed endoplasmic reticulum, recruited by DNAJB9/ERdj4 to the luminal region of ERN1/IRE1, leading to disrupt the dimerization of ERN1/IRE1, thereby inactivating ERN1/IRE1. Also binds and inactivates EIF2AK3/PERK in unstressed cells. Accumulation of misfolded protein in the endoplasmic reticulum causes release of HSPA5/BiP from ERN1/IRE1 and EIF2AK3/PERK, allowing their homodimerization and subsequent activation. Plays an auxiliary role in post-translational transport of small presecretory proteins across endoplasmic reticulum (ER). May function as an allosteric modulator for SEC61 channel-forming translocon complex, likely cooperating with SEC62 to enable the productive insertion of these precursors into SEC61 channel. Appears to specifically regulate translocation of precursors having inhibitory residues in their mature region that weaken channel gating. May also play a role in apoptosis and cell proliferation. The protein is Endoplasmic reticulum chaperone BiP of Ictidomys tridecemlineatus (Thirteen-lined ground squirrel).